The chain runs to 105 residues: uncharacterized protein (105 aa).

This is an uncharacterized protein from Microplitis demolitor (Parasitoid wasp).